The primary structure comprises 299 residues: tRNA dimethylallyltransferase (299 aa).

11-18 (GPTAVGKT) is an ATP binding site. 13–18 (TAVGKT) contributes to the substrate binding site. The segment at 36 to 39 (DSQQ) is interaction with substrate tRNA.

It belongs to the IPP transferase family. As to quaternary structure, monomer. Mg(2+) serves as cofactor.

The catalysed reaction is adenosine(37) in tRNA + dimethylallyl diphosphate = N(6)-dimethylallyladenosine(37) in tRNA + diphosphate. In terms of biological role, catalyzes the transfer of a dimethylallyl group onto the adenine at position 37 in tRNAs that read codons beginning with uridine, leading to the formation of N6-(dimethylallyl)adenosine (i(6)A). This is tRNA dimethylallyltransferase from Streptococcus pyogenes serotype M49 (strain NZ131).